The chain runs to 190 residues: uncharacterized protein (190 aa).

This sequence to E.coli YdjR.

This is an uncharacterized protein from Pseudomonas putida (Arthrobacter siderocapsulatus).